The sequence spans 679 residues: Tripartite terminase subunit 1 (679 aa).

A C3H1-type zinc finger spans residues 180 to 208 (CIYCLNEHMMLPNQGESLPSLMMCVNCKH).

Belongs to the herpesviridae TRM1 protein family. In terms of assembly, associates with TRM2 and TRM3 to form the tripartite terminase complex. Interacts with portal protein.

Its subcellular location is the host nucleus. Its function is as follows. Component of the molecular motor that translocates viral genomic DNA in empty capsid during DNA packaging. Forms a tripartite terminase complex together with TRM2 and TRM3 in the host cytoplasm. Once the complex reaches the host nucleus, it interacts with the capsid portal vertex. This portal forms a ring in which genomic DNA is translocated into the capsid. TRM1 carries an endonuclease activity that plays an important role for the cleavage of concatemeric viral DNA into unit length genomes. In Saimiriine herpesvirus 2 (strain 11) (SaHV-2), this protein is Tripartite terminase subunit 1.